The chain runs to 346 residues: Probable RNA methyltransferase PA1839 (346 aa).

Residue Glu91 is the Proton acceptor of the active site. One can recognise a Radical SAM core domain in the interval 94-320 (LLPRGGLCVS…TKVRNSAGQD (227 aa)). Cys101 and Cys325 are joined by a disulfide. The [4Fe-4S] cluster site is built by Cys108, Cys112, and Cys115. S-adenosyl-L-methionine is bound by residues 153-154 (GE), Ser183, 206-208 (SLH), and Asn282. The active-site S-methylcysteine intermediate is the Cys325.

It belongs to the radical SAM superfamily. RlmN family. Requires [4Fe-4S] cluster as cofactor.

It localises to the cytoplasm. This chain is Probable RNA methyltransferase PA1839, found in Pseudomonas aeruginosa (strain ATCC 15692 / DSM 22644 / CIP 104116 / JCM 14847 / LMG 12228 / 1C / PRS 101 / PAO1).